A 101-amino-acid chain; its full sequence is Small ribosomal subunit protein uS14 (101 aa).

Belongs to the universal ribosomal protein uS14 family. As to quaternary structure, part of the 30S ribosomal subunit. Contacts proteins S3 and S10.

Functionally, binds 16S rRNA, required for the assembly of 30S particles and may also be responsible for determining the conformation of the 16S rRNA at the A site. In Synechococcus sp. (strain JA-3-3Ab) (Cyanobacteria bacterium Yellowstone A-Prime), this protein is Small ribosomal subunit protein uS14.